A 571-amino-acid chain; its full sequence is Glutamate--tRNA ligase (571 aa).

Positions 38 to 48 (PSPTGFMHIGG) match the 'HIGH' region motif. Residues 316 to 320 (KLSKR) carry the 'KMSKS' region motif. Residue K319 participates in ATP binding.

The protein belongs to the class-I aminoacyl-tRNA synthetase family. Glutamate--tRNA ligase type 1 subfamily. In terms of assembly, monomer.

It localises to the cytoplasm. The enzyme catalyses tRNA(Glu) + L-glutamate + ATP = L-glutamyl-tRNA(Glu) + AMP + diphosphate. In terms of biological role, catalyzes the attachment of glutamate to tRNA(Glu) in a two-step reaction: glutamate is first activated by ATP to form Glu-AMP and then transferred to the acceptor end of tRNA(Glu). The chain is Glutamate--tRNA ligase from Sorangium cellulosum (strain So ce56) (Polyangium cellulosum (strain So ce56)).